Reading from the N-terminus, the 325-residue chain is Acetyl-coenzyme A carboxylase carboxyl transferase subunit alpha (325 aa).

The CoA carboxyltransferase C-terminal domain maps to 35–292 (EIEKLEARLA…DKVLKRSLKQ (258 aa)).

This sequence belongs to the AccA family. In terms of assembly, acetyl-CoA carboxylase is a heterohexamer composed of biotin carboxyl carrier protein (AccB), biotin carboxylase (AccC) and two subunits each of ACCase subunit alpha (AccA) and ACCase subunit beta (AccD).

The protein localises to the cytoplasm. The catalysed reaction is N(6)-carboxybiotinyl-L-lysyl-[protein] + acetyl-CoA = N(6)-biotinyl-L-lysyl-[protein] + malonyl-CoA. It participates in lipid metabolism; malonyl-CoA biosynthesis; malonyl-CoA from acetyl-CoA: step 1/1. Its function is as follows. Component of the acetyl coenzyme A carboxylase (ACC) complex. First, biotin carboxylase catalyzes the carboxylation of biotin on its carrier protein (BCCP) and then the CO(2) group is transferred by the carboxyltransferase to acetyl-CoA to form malonyl-CoA. The protein is Acetyl-coenzyme A carboxylase carboxyl transferase subunit alpha of Geobacillus sp. (strain WCH70).